A 206-amino-acid polypeptide reads, in one-letter code: Protein-methionine-sulfoxide reductase heme-binding subunit MsrQ (206 aa).

Transmembrane regions (helical) follow at residues I14 to A34, F45 to T65, M82 to D102, P118 to T138, W149 to W169, and Q179 to W199.

This sequence belongs to the MsrQ family. As to quaternary structure, heterodimer of a catalytic subunit (MsrP) and a heme-binding subunit (MsrQ). FMN is required as a cofactor. The cofactor is heme b.

It is found in the cell inner membrane. Functionally, part of the MsrPQ system that repairs oxidized periplasmic proteins containing methionine sulfoxide residues (Met-O), using respiratory chain electrons. Thus protects these proteins from oxidative-stress damage caused by reactive species of oxygen and chlorine generated by the host defense mechanisms. MsrPQ is essential for the maintenance of envelope integrity under bleach stress, rescuing a wide series of structurally unrelated periplasmic proteins from methionine oxidation. MsrQ provides electrons for reduction to the reductase catalytic subunit MsrP, using the quinone pool of the respiratory chain. This Bordetella pertussis (strain Tohama I / ATCC BAA-589 / NCTC 13251) protein is Protein-methionine-sulfoxide reductase heme-binding subunit MsrQ.